We begin with the raw amino-acid sequence, 277 residues long: Glycerol-3-phosphate acyltransferase (277 aa).

Transmembrane regions (helical) follow at residues 3–23, 55–75, 79–99, 111–131, and 155–175; these read FFIF…AIIV, IMVM…AKLL, PVTV…PVFF, IGAL…TWLL, and LILV…ILVL. The tract at residues 231–277 is disordered; that stretch reads KTEQAEAVKKPKAKKATTKAKKTTSKEETAKKPKSTKPKTKTVKEKE. Basic residues-rich tracts occupy residues 240–253 and 262–271; these read KPKA…AKKT and KPKSTKPKTK.

The protein belongs to the PlsY family. As to quaternary structure, probably interacts with PlsX.

The protein localises to the cell inner membrane. It carries out the reaction an acyl phosphate + sn-glycerol 3-phosphate = a 1-acyl-sn-glycero-3-phosphate + phosphate. It functions in the pathway lipid metabolism; phospholipid metabolism. Catalyzes the transfer of an acyl group from acyl-phosphate (acyl-PO(4)) to glycerol-3-phosphate (G3P) to form lysophosphatidic acid (LPA). This enzyme utilizes acyl-phosphate as fatty acyl donor, but not acyl-CoA or acyl-ACP. This chain is Glycerol-3-phosphate acyltransferase, found in Legionella pneumophila (strain Lens).